The sequence spans 1415 residues: DNA-directed RNA polymerase subunit beta' (1415 aa).

The Zn(2+) site is built by Cys72, Cys74, Cys87, and Cys90. The Mg(2+) site is built by Asp463, Asp465, and Asp467. Zn(2+) contacts are provided by Cys811, Cys885, Cys892, and Cys895.

This sequence belongs to the RNA polymerase beta' chain family. As to quaternary structure, the RNAP catalytic core consists of 2 alpha, 1 beta, 1 beta' and 1 omega subunit. When a sigma factor is associated with the core the holoenzyme is formed, which can initiate transcription. Mg(2+) serves as cofactor. Zn(2+) is required as a cofactor.

It catalyses the reaction RNA(n) + a ribonucleoside 5'-triphosphate = RNA(n+1) + diphosphate. Its function is as follows. DNA-dependent RNA polymerase catalyzes the transcription of DNA into RNA using the four ribonucleoside triphosphates as substrates. The protein is DNA-directed RNA polymerase subunit beta' of Cereibacter sphaeroides (strain ATCC 17029 / ATH 2.4.9) (Rhodobacter sphaeroides).